The sequence spans 165 residues: Heme oxygenase (165 aa).

Belongs to the heme oxygenase family.

It carries out the reaction heme b + 3 reduced [NADPH--hemoprotein reductase] + 3 O2 = biliverdin IXalpha + CO + Fe(2+) + 3 oxidized [NADPH--hemoprotein reductase] + 3 H2O + H(+). Its function is as follows. Catalyzes the opening of the heme ring to form the open-chain tetrapyrrole biliverdin IX with the release of iron and carbon monoxide (CO). This Xanthomonas campestris pv. campestris (strain 8004) protein is Heme oxygenase (bphO).